The primary structure comprises 264 residues: Indole-3-glycerol phosphate synthase (264 aa).

The protein belongs to the TrpC family.

It carries out the reaction 1-(2-carboxyphenylamino)-1-deoxy-D-ribulose 5-phosphate + H(+) = (1S,2R)-1-C-(indol-3-yl)glycerol 3-phosphate + CO2 + H2O. The protein operates within amino-acid biosynthesis; L-tryptophan biosynthesis; L-tryptophan from chorismate: step 4/5. The sequence is that of Indole-3-glycerol phosphate synthase from Stenotrophomonas maltophilia (strain K279a).